Consider the following 211-residue polypeptide: GTP-binding protein ypt5 (211 aa).

Residue 21–28 (GDSAVGKS) coordinates GTP. The Effector region motif lies at 43–51 (RESTIGAAF). GTP is bound by residues 70–74 (DTAGQ) and 128–131 (NKLD). S-geranylgeranyl cysteine attachment occurs at residues cysteine 209 and cysteine 211. At cysteine 211 the chain carries Cysteine methyl ester.

The protein belongs to the small GTPase superfamily. Rab family.

It localises to the cell membrane. In terms of biological role, protein transport. Probably involved in vesicular traffic. The sequence is that of GTP-binding protein ypt5 (ypt5) from Schizosaccharomyces pombe (strain 972 / ATCC 24843) (Fission yeast).